The chain runs to 403 residues: Large ribosomal subunit protein uL3 (403 aa).

The disordered stretch occupies residues 1–38; sequence MSHRKFSAPRHGSLGFLPRKRSSRHRGKVKSFPKDDSS. Ser-13 is modified (phosphoserine). Positions 18-31 are enriched in basic residues; it reads PRKRSSRHRGKVKS. A Glycyl lysine isopeptide (Lys-Gly) (interchain with G-Cter in SUMO2) cross-link involves residue Lys-39. Lys-136 carries the N6-acetyllysine modification. Glycyl lysine isopeptide (Lys-Gly) (interchain with G-Cter in SUMO2) cross-links involve residues Lys-224 and Lys-226. Residue His-245 is modified to Tele-methylhistidine. Lys-286 and Lys-294 each carry N6-acetyllysine; alternate. Lys-286 is covalently cross-linked (Glycyl lysine isopeptide (Lys-Gly) (interchain with G-Cter in SUMO2); alternate). Lys-294 participates in a covalent cross-link: Glycyl lysine isopeptide (Lys-Gly) (interchain with G-Cter in SUMO1); alternate. Ser-304 bears the Phosphoserine mark. Position 366 is an N6-acetyllysine; alternate (Lys-366). A Glycyl lysine isopeptide (Lys-Gly) (interchain with G-Cter in SUMO2); alternate cross-link involves residue Lys-366. Lys-373 is subject to N6-acetyllysine. Residues Lys-386, Lys-393, and Lys-399 each participate in a glycyl lysine isopeptide (Lys-Gly) (interchain with G-Cter in SUMO2) cross-link.

The protein belongs to the universal ribosomal protein uL3 family. As to quaternary structure, component of the large ribosomal subunit. Interacts with DHX33. Post-translationally, constitutively monomethylated at His-245 by METTL18. Methylation at His-245 regulates translation elongation by slowing ribosome traversal on tyrosine codons: slower elongation provides enough time for proper folding of synthesized proteins and prevents cellular aggregation of tyrosine-rich proteins It is not required for incorporation of RPL3 into ribosomes.

It is found in the nucleus. The protein localises to the nucleolus. Its subcellular location is the cytoplasm. Functionally, component of the large ribosomal subunit. The ribosome is a large ribonucleoprotein complex responsible for the synthesis of proteins in the cell. The sequence is that of Large ribosomal subunit protein uL3 (RPL3) from Sus scrofa (Pig).